Consider the following 854-residue polypeptide: ATP-dependent zinc metalloprotease FtsH (854 aa).

Residues Met1–Thr5 lie on the Cytoplasmic side of the membrane. The helical transmembrane segment at Val6 to Phe26 threads the bilayer. The Extracellular portion of the chain corresponds to Ser27 to Trp112. A helical transmembrane segment spans residues Leu113 to Val133. Topologically, residues Met134–Arg854 are cytoplasmic. Gly207–Thr214 contacts ATP. Position 429 (His429) interacts with Zn(2+). Glu430 is a catalytic residue. Zn(2+) is bound by residues His433 and Asp505. The segment at Ala658–Arg854 is disordered. Composition is skewed to low complexity over residues Pro661–Ser692 and Ala698–Pro719. Positions Gly720–Thr730 are enriched in pro residues. Positions Asn749–Gln778 are enriched in low complexity. A compositionally biased stretch (polar residues) spans Gly812–Ser822. The segment covering Pro825–His834 has biased composition (pro residues).

The protein in the central section; belongs to the AAA ATPase family. It in the C-terminal section; belongs to the peptidase M41 family. In terms of assembly, homohexamer. It depends on Zn(2+) as a cofactor.

It is found in the cell membrane. In terms of biological role, acts as a processive, ATP-dependent zinc metallopeptidase for both cytoplasmic and membrane proteins. Plays a role in the quality control of integral membrane proteins. This chain is ATP-dependent zinc metalloprotease FtsH, found in Rhodococcus erythropolis (strain PR4 / NBRC 100887).